We begin with the raw amino-acid sequence, 421 residues long: 3-isopropylmalate dehydratase large subunit (421 aa).

Cys-292, Cys-352, and Cys-355 together coordinate [4Fe-4S] cluster.

This sequence belongs to the aconitase/IPM isomerase family. LeuC type 2 subfamily. As to quaternary structure, heterodimer of LeuC and LeuD. It depends on [4Fe-4S] cluster as a cofactor.

The catalysed reaction is (2R,3S)-3-isopropylmalate = (2S)-2-isopropylmalate. It participates in amino-acid biosynthesis; L-leucine biosynthesis; L-leucine from 3-methyl-2-oxobutanoate: step 2/4. In terms of biological role, catalyzes the isomerization between 2-isopropylmalate and 3-isopropylmalate, via the formation of 2-isopropylmaleate. The polypeptide is 3-isopropylmalate dehydratase large subunit (Herpetosiphon aurantiacus (strain ATCC 23779 / DSM 785 / 114-95)).